The following is a 470-amino-acid chain: Cysteine--tRNA ligase (470 aa).

Residue Cys28 participates in Zn(2+) binding. The short motif at 30–40 (PTVYNYIHIGN) is the 'HIGH' region element. Residues Cys212, His237, and Glu241 each coordinate Zn(2+). The 'KMSKS' region motif lies at 271–275 (KMSKS). Residue Lys274 participates in ATP binding.

The protein belongs to the class-I aminoacyl-tRNA synthetase family. As to quaternary structure, monomer. It depends on Zn(2+) as a cofactor.

It is found in the cytoplasm. It carries out the reaction tRNA(Cys) + L-cysteine + ATP = L-cysteinyl-tRNA(Cys) + AMP + diphosphate. The chain is Cysteine--tRNA ligase from Limosilactobacillus reuteri (strain DSM 20016) (Lactobacillus reuteri).